The following is a 132-amino-acid chain: Transmembrane protein 170B (132 aa).

Residues 1–37 (MKAEGGDHSMINLSVQQVLSLWAHGTVLRNLTEMWYW) are Extracellular-facing. Residue Asn-12 is glycosylated (N-linked (GlcNAc...) asparagine). A helical membrane pass occupies residues 38–58 (IFLWALFSSLFVHGAAGVLMF). The Cytoplasmic portion of the chain corresponds to 59–68 (VMLQRHRQGR). The chain crosses the membrane as a helical span at residues 69 to 89 (VISVIAVSIGFLASVTGAMIT). The Extracellular portion of the chain corresponds to 90–104 (SAAVAGIYRVAGKNM). Residues 105–125 (APLEALVWGVGQTVLTLIISF) form a helical membrane-spanning segment. The Cytoplasmic portion of the chain corresponds to 126–132 (SRILATL).

The protein belongs to the TMEM170 family. As to quaternary structure, interacts with CTNNB1. As to expression, expressed in normal breast tissues. Down-regulated in breast cancer cells (at protein level).

It localises to the cell membrane. Negatively regulates the canonical Wnt signaling in breast cancer cells. Exerts an inhibitory effect on breast cancer growth by inhibiting CTNNB1 stabilization and nucleus translocation, which reduces the activity of Wnt targets. The protein is Transmembrane protein 170B (TMEM170B) of Homo sapiens (Human).